The primary structure comprises 821 residues: Cell wall integrity transcriptional regulator CAS5 (821 aa).

Disordered stretches follow at residues 42–66 (HLQS…LNQH), 219–245 (FESP…LSTP), 305–432 (TKSN…STSQ), 544–576 (QEEE…TSSL), and 607–750 (VKQE…KHKC). A compositionally biased stretch (polar residues) spans 222–245 (PQSHIQSQPSYSQGYHNQNSLSTP). Positions 305 to 318 (TKSNSTSSYNSTLN) are enriched in low complexity. Residues 319 to 329 (PFYTPSQQLSS) are compositionally biased toward polar residues. The span at 372-387 (QLRKAKSYTSLLRKKK) shows a compositional bias: basic residues. Residues 396–412 (QNQQHQQQQQQQQQQQQ) are compositionally biased toward low complexity. Polar residues predominate over residues 422–432 (QNLSFPNSTSQ). Over residues 545 to 561 (EEEQEHQDEQMEIDSFE) the composition is skewed to acidic residues. 2 stretches are compositionally biased toward low complexity: residues 662-674 (LVNK…NNDT) and 684-693 (KNTNGNGNND). Over residues 694-714 (NDNDSEENNDNVDDADDDDDG) the composition is skewed to acidic residues. 2 C2H2-type zinc fingers span residues 748-770 (HKCP…LKSH) and 776-801 (FECQ…KKIH). S769 carries the post-translational modification Phosphoserine.

In terms of processing, phosphorylation at Ser-769 and probably additional serine residues. GLC7 dephosphorylates CAS5 in response to cell wall stress which leads to its translocation to the nucleus.

Its subcellular location is the nucleus. It is found in the cytoplasm. In terms of biological role, transcription factor that acts with ADA2 to promote cell wall integrity. Regulates the expression of target genes in concert with the transcriptional regulators SWI4 and SWI6. Crucial for proper cell cycle dynamics and responses to echinocandins, which inhibit beta-1,3-glucan synthesis. Has distinct transcriptional targets under basal and stress conditions. Also regulates a transcriptional network that influences the response to fluconazole. Plays a key role in adherence, hyphal development, and virulence. Acts as a repressor of hypha-specific genes during yeast-form growth. This Candida albicans (strain SC5314 / ATCC MYA-2876) (Yeast) protein is Cell wall integrity transcriptional regulator CAS5.